The following is a 271-amino-acid chain: MEGKDTKKKKKNIIIINDKGEMRSVAKKTLDSSESSLAQSKEVGEVDEVKGMETDAEKKDEPAMESKGCCKKCSNGDARGCHSERSGNYSEQPEKQEAADGEDSSKKESPREEQTPLLDKEEADEKTEENAKPSSEKKNDAFIPPILGTSMTVANKEIFEDRENGNTVVEGWMWKKRRIFSCFWHRKYFVLTREGILKYYKADGRRHPKGNWNMKDSTEIRHYNLPSEENSHPFRVLVFFPDFSFLLAFDDKNSKDYWVEKLNETIRRLKK.

The interval 26 to 145 (AKKTLDSSES…EKKNDAFIPP (120 aa)) is disordered. Basic and acidic residues-rich tracts occupy residues 42 to 64 (EVGE…EPAM), 92 to 120 (QPEK…LLDK), and 128 to 140 (EENA…KKND). The 102-residue stretch at 166–267 (NTVVEGWMWK…WVEKLNETIR (102 aa)) folds into the PH domain.

The polypeptide is PH domain-containing protein ECU06_0670 (Encephalitozoon cuniculi (strain GB-M1) (Microsporidian parasite)).